We begin with the raw amino-acid sequence, 185 residues long: MISAGDFRNGLTLEIDNAVYQVIEFQHVKPGKGAAFVRTKLRDIKNGGLTERTFRPQEKYPQAHIERSDMQYLYSDGELYNFMNVETFDQIALNDEAVGDSLKFVKENDMVKMLSHQGNVFAIEPPLFVELVIVDTEPGFKGDTAQGATKPAKVETGATVYVPLFVNQGDKISIDTRTGDYMKRV.

This sequence belongs to the elongation factor P family.

The protein resides in the cytoplasm. It participates in protein biosynthesis; polypeptide chain elongation. Functionally, involved in peptide bond synthesis. Stimulates efficient translation and peptide-bond synthesis on native or reconstituted 70S ribosomes in vitro. Probably functions indirectly by altering the affinity of the ribosome for aminoacyl-tRNA, thus increasing their reactivity as acceptors for peptidyl transferase. The protein is Elongation factor P of Lachnoclostridium phytofermentans (strain ATCC 700394 / DSM 18823 / ISDg) (Clostridium phytofermentans).